We begin with the raw amino-acid sequence, 766 residues long: UPF0313 protein PP_4872 (766 aa).

The Radical SAM core domain occupies 371-649; sequence AYEMIRFSVN…KAFLRYHDPK (279 aa). The [4Fe-4S] cluster site is built by Cys385, Cys389, and Cys392. A disordered region spans residues 670-766; the sequence is GKHQLIPLHQ…KKPRQPVIPR (97 aa). Over residues 723–735 the composition is skewed to basic and acidic residues; it reads KPWDKREKAKAEA.

This sequence belongs to the UPF0313 family. The cofactor is [4Fe-4S] cluster.

The chain is UPF0313 protein PP_4872 from Pseudomonas putida (strain ATCC 47054 / DSM 6125 / CFBP 8728 / NCIMB 11950 / KT2440).